A 147-amino-acid polypeptide reads, in one-letter code: Hemoglobin subunit beta (147 aa).

Valine 2 is subject to N-acetylvaline. A Globin domain is found at 3 to 147 (HLTGEEKGIV…VATALAHKYH (145 aa)). Phosphothreonine is present on threonine 13. Residue serine 45 is modified to Phosphoserine. N6-acetyllysine is present on lysine 60. Position 64 (histidine 64) interacts with heme b. At lysine 83 the chain carries N6-acetyllysine. Position 93 (histidine 93) interacts with heme b. Cysteine 94 is subject to S-nitrosocysteine. An N6-acetyllysine modification is found at lysine 145.

The protein belongs to the globin family. In terms of assembly, heterotetramer of two alpha chains and two beta chains. Red blood cells.

In terms of biological role, involved in oxygen transport from the lung to the various peripheral tissues. In Rhinolophus ferrumequinum (Greater horseshoe bat), this protein is Hemoglobin subunit beta (HBB).